Reading from the N-terminus, the 193-residue chain is Transcriptional activator GvpE2 (193 aa).

Residue 143-148 (KRKVYR) coordinates DNA. The leucine-zipper stretch occupies residues 153–184 (QAAIEHVDSVVLQLLTFAVGLQTIMADCIVNQ).

As to quaternary structure, homodimer. Interacts with endogenous GvpD, also with GvpD from H.mediterranei.

Its subcellular location is the cytoplasm. Degraded once GvpD is translated; degradation requires 'Arg-494' of GvpD; tested in transgenic H.volcanii. Fusion of green fluorescent protein to its C-terminus partially protects it from degradation. In terms of biological role, plays a regulatory role in gas vesicle synthesis, required to activate transcription of the c-gvpA operon. Gas vesicles are hollow, gas filled proteinaceous nanostructures found in several microbial planktonic microorganisms. They allow positioning of halobacteria at the optimal depth for growth in the poorly aerated, shallow brine pools of their habitat. Its function is as follows. Expression of 2 c-vac DNA fragments containing 2 divergently transcribed regions (gvpE-gvpF-gvpG-gvpH-gvpI-gvpJ-gvpK-gvpL-gvpM and gvpA-gvpC-gvpN-gvpO) allows H.volcanii to produce gas vesicles. All site-directed mutagenesis is tested in H.volcanii. This Halobacterium salinarum (strain ATCC 700922 / JCM 11081 / NRC-1) (Halobacterium halobium) protein is Transcriptional activator GvpE2.